Here is a 553-residue protein sequence, read N- to C-terminus: Formate--tetrahydrofolate ligase (553 aa).

65-72 (TPAGEGKS) is a binding site for ATP.

It belongs to the formate--tetrahydrofolate ligase family.

It carries out the reaction (6S)-5,6,7,8-tetrahydrofolate + formate + ATP = (6R)-10-formyltetrahydrofolate + ADP + phosphate. Its pathway is one-carbon metabolism; tetrahydrofolate interconversion. In Brachyspira hyodysenteriae (strain ATCC 49526 / WA1), this protein is Formate--tetrahydrofolate ligase.